The chain runs to 44 residues: Photosystem I reaction center subunit IX (44 aa).

A helical membrane pass occupies residues tyrosine 7–isoleucine 27.

The protein belongs to the PsaJ family.

It localises to the plastid. It is found in the chloroplast thylakoid membrane. Functionally, may help in the organization of the PsaE and PsaF subunits. The sequence is that of Photosystem I reaction center subunit IX from Welwitschia mirabilis (Tree tumbo).